The following is a 265-amino-acid chain: Diphthine synthase (265 aa).

S-adenosyl-L-methionine is bound by residues Leu9, Asp85, Ile88, 113–114, Leu168, Ala211, and His236; that span reads TA.

It belongs to the diphthine synthase family. Homodimer.

It catalyses the reaction 2-[(3S)-amino-3-carboxypropyl]-L-histidyl-[translation elongation factor 2] + 3 S-adenosyl-L-methionine = diphthine-[translation elongation factor 2] + 3 S-adenosyl-L-homocysteine + 3 H(+). The protein operates within protein modification; peptidyl-diphthamide biosynthesis. In terms of biological role, S-adenosyl-L-methionine-dependent methyltransferase that catalyzes the trimethylation of the amino group of the modified target histidine residue in translation elongation factor 2 (EF-2), to form an intermediate called diphthine. The three successive methylation reactions represent the second step of diphthamide biosynthesis. The polypeptide is Diphthine synthase (Halorubrum lacusprofundi (strain ATCC 49239 / DSM 5036 / JCM 8891 / ACAM 34)).